Here is a 147-residue protein sequence, read N- to C-terminus: AP-2 complex subunit sigma (147 aa).

It belongs to the adaptor complexes small subunit family. As to quaternary structure, adaptor protein complex 2 (AP-2) is a heterotetramer composed of two large adaptins (alpha-type subunit APL3 and beta-type subunit APL1), a medium chain (mu-type subunit APM4) and a small adaptin (sigma-type subunit APS2). Interacts with APL1.

It is found in the cell membrane. The protein localises to the membrane. Its subcellular location is the coated pit. Its function is as follows. Component of the adaptor complexes which link clathrin to receptors in coated vesicles. Clathrin-associated protein complexes are believed to interact with the cytoplasmic tails of membrane proteins, leading to their selection and concentration. The protein is AP-2 complex subunit sigma (APS2) of Saccharomyces cerevisiae (strain ATCC 204508 / S288c) (Baker's yeast).